Here is a 2144-residue protein sequence, read N- to C-terminus: Reducing polyketide synthase PKS2 (2144 aa).

The Ketosynthase family 3 (KS3) domain occupies P10–A436. Active-site for beta-ketoacyl synthase activity residues include C183, H319, and H360. Positions V538 to A855 are malonyl-CoA:ACP transacylase (MAT). Residues H924–D1058 form an N-terminal hotdog fold region. Positions H924–D1214 are dehydratase (DH) domain. A PKS/mFAS DH domain is found at H924–Q1237. Positions H1076–Q1237 are C-terminal hotdog fold. The interval G1461–L1747 is enoyl reductase (ER) domain. The ketoreductase (KR) domain stretch occupies residues A1771–V1948. The Carrier domain maps to E2059–R2136. S2096 is modified (O-(pantetheine 4'-phosphoryl)serine).

Its pathway is mycotoxin biosynthesis. Reducing polyketide synthase (PKS); part of the Tox1A locus, one of the 2 loci that mediate the biosynthesis of T-toxin, a family of linear polyketides 37 to 45 carbons in length, of which the major component is 41 carbons, and which leads to high virulence to maize. One of the PKSs (PKS1 or PKS2) could synthesize a precursor, used subsequently by the other PKS as starter unit, to add additional carbons. Variability in the length of the final carbon backbone C35-47 could be achieved by varying the number of condensation cycles, or use of different starter or extender units or might be due to decarboxylation of the penultimate product, catalyzed by DEC1. Additional proteins are required for the biosynthesis of T-toxin, including oxidoreductases RED1, RED2, RED3, LAM1 and OXI1, as well as esterase TOX9. The chain is Reducing polyketide synthase PKS2 from Cochliobolus heterostrophus (strain C4 / ATCC 48331 / race T) (Southern corn leaf blight fungus).